We begin with the raw amino-acid sequence, 239 residues long: tRNA1(Val) (adenine(37)-N6)-methyltransferase (239 aa).

The protein belongs to the methyltransferase superfamily. tRNA (adenine-N(6)-)-methyltransferase family.

It localises to the cytoplasm. It catalyses the reaction adenosine(37) in tRNA1(Val) + S-adenosyl-L-methionine = N(6)-methyladenosine(37) in tRNA1(Val) + S-adenosyl-L-homocysteine + H(+). In terms of biological role, specifically methylates the adenine in position 37 of tRNA(1)(Val) (anticodon cmo5UAC). This chain is tRNA1(Val) (adenine(37)-N6)-methyltransferase, found in Vibrio vulnificus (strain YJ016).